Consider the following 160-residue polypeptide: Probable NADH dehydrogenase [ubiquinone] 1 beta subcomplex subunit 2, mitochondrial (160 aa).

It belongs to the complex I NDUFB2 subunit family. In terms of assembly, complex I is composed of 45 different subunits.

The protein localises to the mitochondrion inner membrane. Functionally, accessory subunit of the mitochondrial membrane respiratory chain NADH dehydrogenase (Complex I), that is believed not to be involved in catalysis. Complex I functions in the transfer of electrons from NADH to the respiratory chain. The immediate electron acceptor for the enzyme is believed to be ubiquinone. This Caenorhabditis briggsae protein is Probable NADH dehydrogenase [ubiquinone] 1 beta subcomplex subunit 2, mitochondrial.